The following is a 299-amino-acid chain: Porphobilinogen deaminase (299 aa).

Cysteine 242 is subject to S-(dipyrrolylmethanemethyl)cysteine.

This sequence belongs to the HMBS family. In terms of assembly, monomer. Requires dipyrromethane as cofactor.

The catalysed reaction is 4 porphobilinogen + H2O = hydroxymethylbilane + 4 NH4(+). It functions in the pathway porphyrin-containing compound metabolism; protoporphyrin-IX biosynthesis; coproporphyrinogen-III from 5-aminolevulinate: step 2/4. Functionally, tetrapolymerization of the monopyrrole PBG into the hydroxymethylbilane pre-uroporphyrinogen in several discrete steps. The protein is Porphobilinogen deaminase of Rickettsia typhi (strain ATCC VR-144 / Wilmington).